Consider the following 349-residue polypeptide: UPF0324 inner membrane protein YeiH (349 aa).

At 1 to 12 (MTELTLQNHCRT) the chain is on the periplasmic side. Residues 13 to 35 (MWHFIPGLALSAVITGVALWGGA) traverse the membrane as a helical segment. Topologically, residues 36–38 (IPA) are cytoplasmic. The chain crosses the membrane as a helical span at residues 39 to 61 (VAGAGFSALTLAILLGMVIGNTI). Over 62–99 (YPQIWKQCDGGVLFAKQHLLRLGIILYGFRLTFSQIAD) the chain is Periplasmic. A helical membrane pass occupies residues 100-122 (VGISGIVIDVLTLSSTFMLACFL). Over 123-131 (GQKVFGLDR) the chain is Cytoplasmic. Residues 132–151 (HTSWLIGAGSSICGAAAVLA) form a helical membrane-spanning segment. The Periplasmic segment spans residues 152 to 162 (TEPVVKAEASK). Residues 163 to 185 (VTVAVATVVIFGTIAIFLYPAMY) form a helical membrane-spanning segment. Over 186-261 (PLLAHWFSPE…SPATGAEKSK (76 aa)) the chain is Cytoplasmic. The helical transmembrane segment at 262–284 (ITIPWFAIFFIVVAIFNSFHLLP) threads the bilayer. Topologically, residues 285-290 (KAVVDM) are periplasmic. A helical membrane pass occupies residues 291–313 (LVTLDTVLLAMAMAALGLTTHVS). At 314–322 (ALKKAGAKP) the chain is on the cytoplasmic side. A helical membrane pass occupies residues 323–345 (LLMALALFAWLIIGGGAINVLIH). Over 346–349 (SLIA) the chain is Periplasmic.

It belongs to the UPF0324 family.

It localises to the cell inner membrane. This is UPF0324 inner membrane protein YeiH (yeiH) from Salmonella typhimurium (strain LT2 / SGSC1412 / ATCC 700720).